A 144-amino-acid polypeptide reads, in one-letter code: Snaclec trimecetin subunit beta (144 aa).

Residues 1–23 form the signal peptide; that stretch reads MGRFIFVSFGLLVVFLSLSGTAA. 3 disulfide bridges follow: Cys-25-Cys-36, Cys-53-Cys-142, and Cys-119-Cys-134. Positions 32 to 143 constitute a C-type lectin domain; it reads FRRYCYQVFQ…CSSKRYVVCK (112 aa).

Belongs to the snaclec family. As to quaternary structure, heterodimer of subunits alpha and beta; disulfide-linked. As to expression, expressed by the venom gland.

It is found in the secreted. Its function is as follows. Snaclec that induces platelet aggregation in either human platelet rich plasma (PRP) or washed platelet suspensions. It causes aggregation in a dose-dependent manner even in the absence of various platelet agonists such as ADP or von Willebrand factor (vWF). Interestingly, it does not induce aggregation in rabbit PRP. A monoclonal antibody against the platelet GPIb receptor blocks the aggregation induced by trimecetin, suggesting that it acts by binding to GPIb (GP1BA/GP1BB). In Protobothrops mucrosquamatus (Taiwan habu), this protein is Snaclec trimecetin subunit beta.